We begin with the raw amino-acid sequence, 165 residues long: Small ribosomal subunit protein uS5 (165 aa).

Residues 13 to 76 form the S5 DRBM domain; the sequence is LEEKVLVVNR…EAARKNLITI (64 aa).

It belongs to the universal ribosomal protein uS5 family. As to quaternary structure, part of the 30S ribosomal subunit. Contacts proteins S4 and S8.

Functionally, with S4 and S12 plays an important role in translational accuracy. Located at the back of the 30S subunit body where it stabilizes the conformation of the head with respect to the body. The protein is Small ribosomal subunit protein uS5 of Chlamydia abortus (strain DSM 27085 / S26/3) (Chlamydophila abortus).